A 79-amino-acid polypeptide reads, in one-letter code: Acyl carrier protein (79 aa).

Positions 2–77 (SDIEARVKKI…NAIDYANTHH (76 aa)) constitute a Carrier domain. Position 37 is an O-(pantetheine 4'-phosphoryl)serine (serine 37).

The protein belongs to the acyl carrier protein (ACP) family. Post-translationally, 4'-phosphopantetheine is transferred from CoA to a specific serine of apo-ACP by AcpS. This modification is essential for activity because fatty acids are bound in thioester linkage to the sulfhydryl of the prosthetic group.

Its subcellular location is the cytoplasm. Its pathway is lipid metabolism; fatty acid biosynthesis. In terms of biological role, carrier of the growing fatty acid chain in fatty acid biosynthesis. This is Acyl carrier protein from Polaromonas naphthalenivorans (strain CJ2).